A 221-amino-acid chain; its full sequence is Endo-1,4-beta-xylanase 1 (221 aa).

Positions 1–22 are cleaved as a signal peptide; it reads MKFFATIAALVVAAVAAPVAEA. The GH11 domain maps to 29–221; that stretch reads PMLIERAGPG…GTGSASVTVS (193 aa). E114 (nucleophile) is an active-site residue. Catalysis depends on E208, which acts as the Proton donor.

It belongs to the glycosyl hydrolase 11 (cellulase G) family.

The protein resides in the secreted. It carries out the reaction Endohydrolysis of (1-&gt;4)-beta-D-xylosidic linkages in xylans.. It participates in glycan degradation; xylan degradation. In terms of biological role, endo-1,4-beta-xylanase involved in the hydrolysis of xylan, a major structural heterogeneous polysaccharide found in plant biomass representing the second most abundant polysaccharide in the biosphere, after cellulose. Hydrolyzes xylans from oat spelt and birchwood at similar rates, but it has no detectable activity toward Avicel or carboxymethyl cellulose. The sequence is that of Endo-1,4-beta-xylanase 1 (xynI) from Aureobasidium pullulans (Black yeast).